An 853-amino-acid chain; its full sequence is Bromodomain-containing protein bet-1 (853 aa).

Polar residues predominate over residues 1–19 (MSEGSGDQSQQRPWASPRQ). Disordered regions lie at residues 1–22 (MSEG…QQPI) and 141–245 (SLEQ…LRAK). The Bromo 1 domain maps to 39–145 (RHTNKLDYIM…EVIKKSLEQA (107 aa)). The segment covering 141 to 153 (SLEQAPREEHDMD) has biased composition (basic and acidic residues). Low complexity-rich tracts occupy residues 166-175 (SDGGSKSSSS) and 192-215 (SEVS…SVAA). A Glycyl lysine isopeptide (Lys-Gly) (interchain with G-Cter in SUMO) cross-link involves residue K252. The 110-residue stretch at 257-366 (QPLLPSMKPC…EVFDRRWAEL (110 aa)) folds into the Bromo 2 domain. Residues 369–381 (SSSRASSVAPQSA) are compositionally biased toward low complexity. Residues 369–418 (SSSRASSVAPQSAPIAPTPKVAKSSAPKEPKESRKEHKKETTFEASGAKS) form a disordered region. The segment covering 394 to 410 (APKEPKESRKEHKKETT) has biased composition (basic and acidic residues). Residues 419 to 458 (EDLMQINNALSMIREREEKLKAELAAAQAIKDKLTSVKNR) are a coiled coil. One can recognise an NET domain in the interval 516-601 (DSDDEDNKMA…TIPTLNGNGD (86 aa)). Disordered regions lie at residues 594 to 814 (PTLN…DEQT) and 819 to 838 (MRME…VSLS). The segment covering 612–624 (TSSGATGSKGSSS) has biased composition (low complexity). The span at 684-696 (QPPSTSREWNQSS) shows a compositional bias: polar residues. Residues 708–736 (QPPMSRVPASSSTSVSAIGKNNAAASSNS) show a composition bias toward low complexity. Positions 786–807 (QFFQSQPTTSATIRSPTESQPG) are enriched in polar residues. The segment covering 819–832 (MRMEAKRARQKEDE) has biased composition (basic and acidic residues).

Belongs to the BET family. In terms of assembly, interacts with acetylated histone H4. Interacts (via BROMO domain 2) with smo-1 and ubc-9. In terms of tissue distribution, expressed in T-cells, Q-cells, V5-cells and their descendants such as somatic gonad and syncytium.

It localises to the nucleus. Its subcellular location is the chromosome. Required for the establishment and maintenance of stable cell fate in several lineages including V5.pa, T, Z1/Z4 and QR lineages probably by repressing the expression of cell fate determinants. Required to maintain non-distal tip cell (DTC) fate of somatic gonadal cells through the htz-1-mediated repression of transcription factor ceh-22. Regulates the subnuclear localization of histone variant htz-1 in somatic gonadal cells. Plays a role in the attenuation of the let-60/ras pathway, probably by preventing expression of activators of the pathway. Involved in adult locomotion. Acts together with the sumoylation pathway to prevent muscle myosin depletion in aging adults probably by preventing myoblast growth factor receptor egl-15 overexpression. May play a role in vulva development. The polypeptide is Bromodomain-containing protein bet-1 (Caenorhabditis elegans).